Reading from the N-terminus, the 117-residue chain is Phosphoribosyl-ATP pyrophosphatase (117 aa).

The protein belongs to the PRA-PH family.

The protein resides in the cytoplasm. It catalyses the reaction 1-(5-phospho-beta-D-ribosyl)-ATP + H2O = 1-(5-phospho-beta-D-ribosyl)-5'-AMP + diphosphate + H(+). Its pathway is amino-acid biosynthesis; L-histidine biosynthesis; L-histidine from 5-phospho-alpha-D-ribose 1-diphosphate: step 2/9. This is Phosphoribosyl-ATP pyrophosphatase from Rhodospirillum rubrum (strain ATCC 11170 / ATH 1.1.1 / DSM 467 / LMG 4362 / NCIMB 8255 / S1).